Consider the following 301-residue polypeptide: Homoserine O-acetyltransferase (301 aa).

Cys-142 (acyl-thioester intermediate) is an active-site residue. Substrate contacts are provided by Lys-163 and Ser-192. His-235 functions as the Proton acceptor in the catalytic mechanism. Residue Glu-237 is part of the active site. Arg-249 is a substrate binding site.

Belongs to the MetA family.

It is found in the cytoplasm. The enzyme catalyses L-homoserine + acetyl-CoA = O-acetyl-L-homoserine + CoA. It participates in amino-acid biosynthesis; L-methionine biosynthesis via de novo pathway; O-acetyl-L-homoserine from L-homoserine: step 1/1. Transfers an acetyl group from acetyl-CoA to L-homoserine, forming acetyl-L-homoserine. This chain is Homoserine O-acetyltransferase, found in Bacillus thuringiensis subsp. konkukian (strain 97-27).